A 468-amino-acid polypeptide reads, in one-letter code: Phosphomethylpyrimidine synthase (468 aa).

Substrate contacts are provided by residues Asn82, Met111, Tyr141, His177, Ser197–Gly199, Asp238–Arg241, and Glu277. His281 is a Zn(2+) binding site. Tyr304 provides a ligand contact to substrate. His345 contacts Zn(2+). 3 residues coordinate [4Fe-4S] cluster: Cys425, Cys428, and Cys433.

The protein belongs to the ThiC family. It depends on [4Fe-4S] cluster as a cofactor.

It carries out the reaction 5-amino-1-(5-phospho-beta-D-ribosyl)imidazole + S-adenosyl-L-methionine = 4-amino-2-methyl-5-(phosphooxymethyl)pyrimidine + CO + 5'-deoxyadenosine + formate + L-methionine + 3 H(+). It functions in the pathway cofactor biosynthesis; thiamine diphosphate biosynthesis. In terms of biological role, catalyzes the synthesis of the hydroxymethylpyrimidine phosphate (HMP-P) moiety of thiamine from aminoimidazole ribotide (AIR) in a radical S-adenosyl-L-methionine (SAM)-dependent reaction. The chain is Phosphomethylpyrimidine synthase from Prochlorococcus marinus (strain SARG / CCMP1375 / SS120).